We begin with the raw amino-acid sequence, 595 residues long: Laccase-18 (595 aa).

Residues Met1–Ala29 form the signal peptide. 2 consecutive Plastocyanin-like domains span residues Met37–Gly153 and Lys162–Ala316. N-linked (GlcNAc...) asparagine glycosylation is found at Asn42 and Asn48. Positions 87 and 89 each coordinate Cu cation. Asn121 is a glycosylation site (N-linked (GlcNAc...) asparagine). Residues His132 and His134 each coordinate Cu cation. Asn206, Asn345, Asn382, Asn402, Asn409, Asn439, and Asn470 each carry an N-linked (GlcNAc...) asparagine glycan. The Plastocyanin-like 3 domain occupies Asp429 to Pro571. Cu cation-binding residues include Asn488, His491, His493, His550, Cys551, His552, His556, and Met561. Residues Gly570–Pro595 form a disordered region.

Belongs to the multicopper oxidase family. Cu cation serves as cofactor.

It localises to the secreted. The protein localises to the extracellular space. Its subcellular location is the apoplast. It catalyses the reaction 4 hydroquinone + O2 = 4 benzosemiquinone + 2 H2O. Its function is as follows. Lignin degradation and detoxification of lignin-derived products. This chain is Laccase-18 (LAC18), found in Oryza sativa subsp. japonica (Rice).